Reading from the N-terminus, the 103-residue chain is Large ribosomal subunit protein uL24 (103 aa).

It belongs to the universal ribosomal protein uL24 family. Part of the 50S ribosomal subunit.

Functionally, one of two assembly initiator proteins, it binds directly to the 5'-end of the 23S rRNA, where it nucleates assembly of the 50S subunit. Its function is as follows. One of the proteins that surrounds the polypeptide exit tunnel on the outside of the subunit. This is Large ribosomal subunit protein uL24 from Bacillus anthracis (strain A0248).